The chain runs to 802 residues: Penicillin G acylase (802 aa).

The signal sequence occupies residues 1–24 (MKTKWLISVIILFVFIFPQNLVFA). Glutamate 177 contributes to the Ca(2+) binding site. Positions 235-265 (SAVIKASEKVGKERENFVQTSEELGLPLKIG) are cleaved as a propeptide — spacer peptide. Serine 266 serves as the catalytic Nucleophile. Position 341 (aspartate 341) interacts with Ca(2+).

Belongs to the peptidase S45 family. As to quaternary structure, heterodimer of an alpha subunit and a beta subunit processed from the same precursor. Ca(2+) is required as a cofactor.

It is found in the secreted. The catalysed reaction is a penicillin + H2O = 6-aminopenicillanate + a carboxylate. The sequence is that of Penicillin G acylase (pac) from Priestia megaterium (Bacillus megaterium).